The chain runs to 405 residues: Histidine decarboxylase (405 aa).

Substrate is bound at residue His-121. An N6-(pyridoxal phosphate)lysine modification is found at Lys-234.

Belongs to the group II decarboxylase family. As to quaternary structure, homotetramer. The cofactor is pyridoxal 5'-phosphate.

The catalysed reaction is L-histidine + H(+) = histamine + CO2. It participates in siderophore biosynthesis; pseudomonine biosynthesis. This is Histidine decarboxylase from Pseudomonas fluorescens.